A 367-amino-acid polypeptide reads, in one-letter code: E3 ubiquitin-protein ligase RGLG3 (367 aa).

Positions 37 to 257 (NLILGIDFTK…KEAAFALAAL (221 aa)) constitute a VWFA domain. The RING-type zinc finger occupies 323–356 (CPICLTNPKDMAFSCGHTTCKECGVVITTCPLCR).

In terms of assembly, interacts with UBC30, GRXS17 and GLB3. Binds to and coactivates GAF1/IDD2 and ENY/IDD1. As to expression, widely expressed.

The protein localises to the cytoplasm. It localises to the nucleus. The catalysed reaction is S-ubiquitinyl-[E2 ubiquitin-conjugating enzyme]-L-cysteine + [acceptor protein]-L-lysine = [E2 ubiquitin-conjugating enzyme]-L-cysteine + N(6)-ubiquitinyl-[acceptor protein]-L-lysine.. Possesses E3 ubiquitin-protein ligase in vitro. Acts as upstream modulator of jasmonate (JA) signaling in response to various stimuli, such as JA-inhibited root growth, JA-inductive gene expression, coronatine-mediated pathogen susceptibility, wound-stimulated expression of JA-responsive genes and wound-induced JA biosynthesis. Controls fumonisin B1 (FB1)-triggered programmed cell death (PCD) by modulating the JA signaling pathway. May mediate salicylic acid (SA) suppression of JA signaling in FB1-induced responses. May mediate the formation of 'Lys-48'-linked multiubiquitin chains. Mediates the polyubiquitination and subsequent proteasomal degradation of the target protein GRXS17. This Arabidopsis thaliana (Mouse-ear cress) protein is E3 ubiquitin-protein ligase RGLG3.